Consider the following 218-residue polypeptide: Thiopurine S-methyltransferase (218 aa).

Residues Trp-10, Leu-45, Glu-66, and Arg-123 each contribute to the S-adenosyl-L-methionine site.

Belongs to the class I-like SAM-binding methyltransferase superfamily. TPMT family.

The protein resides in the cytoplasm. It carries out the reaction S-adenosyl-L-methionine + a thiopurine = S-adenosyl-L-homocysteine + a thiopurine S-methylether.. This Xanthomonas euvesicatoria pv. vesicatoria (strain 85-10) (Xanthomonas campestris pv. vesicatoria) protein is Thiopurine S-methyltransferase.